Here is a 218-residue protein sequence, read N- to C-terminus: Imidazole glycerol phosphate synthase subunit HisH (218 aa).

In terms of domain architecture, Glutamine amidotransferase type-1 spans 1–213 (MTTIIDYGIG…AALPTTEEAG (213 aa)). Cys79 acts as the Nucleophile in catalysis. Catalysis depends on residues His188 and Glu190.

In terms of assembly, heterodimer of HisH and HisF.

It is found in the cytoplasm. The enzyme catalyses 5-[(5-phospho-1-deoxy-D-ribulos-1-ylimino)methylamino]-1-(5-phospho-beta-D-ribosyl)imidazole-4-carboxamide + L-glutamine = D-erythro-1-(imidazol-4-yl)glycerol 3-phosphate + 5-amino-1-(5-phospho-beta-D-ribosyl)imidazole-4-carboxamide + L-glutamate + H(+). The catalysed reaction is L-glutamine + H2O = L-glutamate + NH4(+). The protein operates within amino-acid biosynthesis; L-histidine biosynthesis; L-histidine from 5-phospho-alpha-D-ribose 1-diphosphate: step 5/9. In terms of biological role, IGPS catalyzes the conversion of PRFAR and glutamine to IGP, AICAR and glutamate. The HisH subunit catalyzes the hydrolysis of glutamine to glutamate and ammonia as part of the synthesis of IGP and AICAR. The resulting ammonia molecule is channeled to the active site of HisF. The chain is Imidazole glycerol phosphate synthase subunit HisH from Salinibacter ruber (strain DSM 13855 / M31).